We begin with the raw amino-acid sequence, 159 residues long: uncharacterized protein (159 aa).

Disordered stretches follow at residues 1–23 and 91–110; these read MEQDWQPGEEVTPGPEPCSKGQA and AGGGRREQSQKPCSNGGPAA.

This is an uncharacterized protein from Homo sapiens (Human).